Reading from the N-terminus, the 620-residue chain is Delta(14)-sterol reductase LBR (620 aa).

The region spanning 1–62 is the Tudor domain; sequence MPGRKFADGE…DIKPLKSFKQ (62 aa). Residues 1 to 215 lie on the Nuclear side of the membrane; it reads MPGRKFADGE…TPQRRDLEFG (215 aa). Residues 52–111 form a disordered region; sequence SDIKPLKSFKQRKSGSTSSSPSRRRSSRSRSRSRSRSPGRAPKGSRRSVSASYQADAKEK. The residue at position 55 (lysine 55) is an N6-acetyllysine. Phosphoserine occurs at positions 59 and 67. Phosphoserine; by CDK1 occurs at positions 71 and 86. Residues 73–88 show a composition bias toward basic residues; sequence SRRRSSRSRSRSRSRS. Serine 88 carries the phosphoserine modification. O-linked (GlcNAc) serine glycosylation is present at serine 96. Serine 99 and serine 101 each carry phosphoserine. Phosphothreonine is present on threonine 123. Serine 133 carries the post-translational modification Phosphoserine. Phosphothreonine is present on threonine 205. A run of 8 helical transmembrane segments spans residues 216–236, 263–283, 304–324, 331–351, 452–472, 486–506, 525–547, and 566–586; these read GVPG…LLLL, VCGV…LPVG, LYAF…DIEL, FLQF…YLYA, IIHD…VPFT, DLSW…YVIF, LAHL…WWGF, and PCGF…ALLI. Residues lysine 599 and lysine 606 each carry the N6-acetyllysine modification.

The protein belongs to the ERG4/ERG24 family. In terms of assembly, interacts with CBX5. Interacts with DNA. Interaction with DNA is sequence independent with higher affinity for supercoiled and relaxed circular DNA than linear DNA. Interacts with lamin B. Interacts with CLNK. Interacts with TMEM147; promoting LBR localization to the nucleus inner membrane. Post-translationally, phosphorylated by CDK1 in mitosis when the inner nuclear membrane breaks down into vesicles that dissociate from the lamina and the chromatin. It is phosphorylated by different protein kinases in interphase when the membrane is associated with these structures. Phosphorylation of LBR and HP1 proteins may be responsible for some of the alterations in chromatin organization and nuclear structure which occur at various times during the cell cycle. Phosphorylated by SRPK1. In late anaphase LBR is dephosphorylated, probably by PP1 and/or PP2A, allowing reassociation with chromatin.

It localises to the nucleus inner membrane. It is found in the nucleus. The protein resides in the cytoplasm. The protein localises to the endoplasmic reticulum membrane. It catalyses the reaction 5alpha-cholest-8,14-dien-3beta-ol + NADPH + H(+) = 5alpha-cholest-8-en-3beta-ol + NADP(+). The enzyme catalyses 4,4-dimethyl-5alpha-cholesta-8,24-dien-3beta-ol + NADP(+) = 4,4-dimethyl-5alpha-cholesta-8,14,24-trien-3beta-ol + NADPH + H(+). It carries out the reaction 4,4-dimethyl-8,14-cholestadien-3beta-ol + NADPH + H(+) = 4,4-dimethyl-5alpha-cholest-8-en-3beta-ol + NADP(+). It functions in the pathway steroid biosynthesis; cholesterol biosynthesis. Its function is as follows. Catalyzes the reduction of the C14-unsaturated bond of lanosterol, as part of the metabolic pathway leading to cholesterol biosynthesis. Plays a critical role in myeloid cell cholesterol biosynthesis which is essential to both myeloid cell growth and functional maturation. Mediates the activation of NADPH oxidases, perhaps by maintaining critical levels of cholesterol required for membrane lipid raft formation during neutrophil differentiation. Anchors the lamina and the heterochromatin to the inner nuclear membrane. In Rattus norvegicus (Rat), this protein is Delta(14)-sterol reductase LBR (Lbr).